A 45-amino-acid polypeptide reads, in one-letter code: Large ribosomal subunit protein bL34 (45 aa).

The tract at residues 1-45 is disordered; it reads MTKRTFGGTSRKRKRVSGFRVRMRSHTGRRVIKSRRKRGRERIAV. Positions 10–45 are enriched in basic residues; sequence SRKRKRVSGFRVRMRSHTGRRVIKSRRKRGRERIAV.

Belongs to the bacterial ribosomal protein bL34 family.

The chain is Large ribosomal subunit protein bL34 from Prochlorococcus marinus subsp. pastoris (strain CCMP1986 / NIES-2087 / MED4).